The primary structure comprises 349 residues: Putative methylesterase 12, chloroplastic (349 aa).

The N-terminal 77 residues, 1 to 77 (MGNRVICMKK…GSTSSRRGTL (77 aa)), are a transit peptide targeting the chloroplast. The tract at residues 61 to 80 (GSMSRRIGSTSSRRGTLSDS) is disordered. Catalysis depends on Ser-173, which acts as the Acyl-ester intermediate. Catalysis depends on charge relay system residues Asp-300 and His-328.

It belongs to the AB hydrolase superfamily. Methylesterase family.

It localises to the plastid. The protein localises to the chloroplast. Putative methylesterase. The polypeptide is Putative methylesterase 12, chloroplastic (Arabidopsis thaliana (Mouse-ear cress)).